Consider the following 438-residue polypeptide: Proline--tRNA ligase (438 aa).

It belongs to the class-II aminoacyl-tRNA synthetase family. ProS type 2 subfamily. In terms of assembly, homodimer.

It is found in the cytoplasm. It catalyses the reaction tRNA(Pro) + L-proline + ATP = L-prolyl-tRNA(Pro) + AMP + diphosphate. Catalyzes the attachment of proline to tRNA(Pro) in a two-step reaction: proline is first activated by ATP to form Pro-AMP and then transferred to the acceptor end of tRNA(Pro). The sequence is that of Proline--tRNA ligase from Gluconobacter oxydans (strain 621H) (Gluconobacter suboxydans).